The sequence spans 235 residues: Myb family transcription factor PHL12 (235 aa).

Positions 1–12 are enriched in basic and acidic residues; that stretch reads MMQSREEIRDDS. The tract at residues 1–20 is disordered; that stretch reads MMQSREEIRDDSSSGLVLTT. In terms of domain architecture, HTH myb-type spans 20-80; that stretch reads TDPKPRLRWT…HLQKFRLGKQ (61 aa). Positions 51-76 form a DNA-binding region, H-T-H motif; that stretch reads PKTIMRVMGVKGLTLYHLKSHLQKFR. The tract at residues 119 to 139 is coiled coil; sequence RNMNEMQMEVQRRIEEEVVIE.

It belongs to the MYB-CC family. Expressed in phloem and/or cambium.

The protein resides in the nucleus. In Arabidopsis thaliana (Mouse-ear cress), this protein is Myb family transcription factor PHL12.